The following is a 115-amino-acid chain: Large ribosomal subunit protein bL19 (115 aa).

This sequence belongs to the bacterial ribosomal protein bL19 family.

This protein is located at the 30S-50S ribosomal subunit interface and may play a role in the structure and function of the aminoacyl-tRNA binding site. This is Large ribosomal subunit protein bL19 from Akkermansia muciniphila (strain ATCC BAA-835 / DSM 22959 / JCM 33894 / BCRC 81048 / CCUG 64013 / CIP 107961 / Muc).